Reading from the N-terminus, the 671-residue chain is UvrABC system protein B (671 aa).

The 158-residue stretch at 26-183 (EGLENGLAHQ…RRLSELQYSR (158 aa)) folds into the Helicase ATP-binding domain. 39–46 (GVTGSGKT) contacts ATP. The Beta-hairpin signature appears at 92 to 115 (YYDYYQPEAYVPSSDTFIEKDASV). Residues 431-593 (QVDDLLSEIR…IIPQGLNKKI (163 aa)) enclose the Helicase C-terminal domain. The UVR domain maps to 631-666 (DQKIRELEAKMYTYAQNLEFEQAAELRDQVHQLRQQ).

The protein belongs to the UvrB family. In terms of assembly, forms a heterotetramer with UvrA during the search for lesions. Interacts with UvrC in an incision complex.

The protein resides in the cytoplasm. In terms of biological role, the UvrABC repair system catalyzes the recognition and processing of DNA lesions. A damage recognition complex composed of 2 UvrA and 2 UvrB subunits scans DNA for abnormalities. Upon binding of the UvrA(2)B(2) complex to a putative damaged site, the DNA wraps around one UvrB monomer. DNA wrap is dependent on ATP binding by UvrB and probably causes local melting of the DNA helix, facilitating insertion of UvrB beta-hairpin between the DNA strands. Then UvrB probes one DNA strand for the presence of a lesion. If a lesion is found the UvrA subunits dissociate and the UvrB-DNA preincision complex is formed. This complex is subsequently bound by UvrC and the second UvrB is released. If no lesion is found, the DNA wraps around the other UvrB subunit that will check the other stand for damage. The chain is UvrABC system protein B from Yersinia pestis bv. Antiqua (strain Antiqua).